Here is a 318-residue protein sequence, read N- to C-terminus: N-succinylornithine carbamoyltransferase (318 aa).

Carbamoyl phosphate contacts are provided by residues 47–50 (SLRT), tryptophan 75, and arginine 110. A N(2)-succinyl-L-ornithine-binding site is contributed by glutamate 142. Residue 147–150 (HPLQ) coordinates carbamoyl phosphate. Residues histidine 176 and lysine 236 each coordinate N(2)-succinyl-L-ornithine. 274 to 275 (CL) provides a ligand contact to carbamoyl phosphate. Residue arginine 278 participates in N(2)-succinyl-L-ornithine binding. Arginine 302 is a binding site for carbamoyl phosphate.

It belongs to the aspartate/ornithine carbamoyltransferase superfamily. SOTCase family. In terms of assembly, homotrimer.

It carries out the reaction N(2)-succinyl-L-ornithine + carbamoyl phosphate = N(2)-succinyl-L-citrulline + phosphate + H(+). It participates in amino-acid biosynthesis; L-arginine biosynthesis. Its function is as follows. Catalyzes the transfer of the carbamoyl group from carbamoyl phosphate to the delta-amino group of N(2)-succinyl-L-ornithine to produce N(2)-succinyl-L-citrulline. Is essential for arginine biosynthesis. Has no activity with either L-ornithine or L-aspartate as substrate. Also has no detectable AOTCase activity, being unable to convert N(2)-acetyl-L-ornithine to N(2)-acetyl-L-citrulline. This chain is N-succinylornithine carbamoyltransferase, found in Bacteroides fragilis (strain 638R).